The following is a 186-amino-acid chain: Putative 3-methyladenine DNA glycosylase (186 aa).

The protein belongs to the DNA glycosylase MPG family.

This Borreliella afzelii (strain PKo) (Borrelia afzelii) protein is Putative 3-methyladenine DNA glycosylase.